We begin with the raw amino-acid sequence, 1009 residues long: MFARIFIPKKHRQRFDEAVSQSLINRMCRSKSLGEPQNRLRRSRSQDHHERPQGSKRASSVPRDTGDEPAQNDRTLRKSNTMIPTQYVSGVNQRTIRVYRGKKSFGFTLRGHAPVWIDSVMPGSPAEACGLKTGDRILFLNGLDMRNCSHEKVVSMLQGSGAMPSLVVEEGPVDYPQSDSEPEETPSAPRSRSPALSSLQWVAEILPPSIRVHGRTFSQQLEHLLTLQERYTICKALETFFQHRNVDTLIVDVFPVLDTPAKQLIWQFIYQLLTYEEQEHCKTKIARFLGFKSAGNRKSGLSLTWTDSFPGPQFETYQQTVASPDSVDSNPYVSLDSPPASPLPSDELSPLPQRRKLFTFSRPPRSRDTDKFLDALSEQLGHRVNIVDDFKGGENDYEEMSFQDEQEVNMLPHELSSASSEDHSSSDDSTSVSYSSGSDHIPPPPQSPPPPPPPLQFTDSPSPLPITPEHLPQPPPAFQHHPIIAPPPPPPRPFLANRPSLHKVLPTREELRAQHSHPRRSSPQPSSQPILQLHQPKAHPILQSSPHTSPQPPHTSAQHTRLQHPSQSIYQSQQTTVPRTSPSLTKQKSLHSQPSQQSFEGTLSSKVPPPPPPPLPPPCDPPPLPKPSPKASDNNHMSVKRLRWEQLGDDPDYHKLSDMVKYLDLDLYFGTQRNSKPTFLPENLKKKDVVEILSHKKAYNASILIAHLKLAPKELRDILMTMSTERLEPAHIKQLLLYAPDDEEVKQFQHYDQDPAKLSEPDQFVLQMLLVPEYKTRLRSLLFKTTVQEKTEEMRAAYECIYKASLELKNSKRLAKILEFVLAMGNYLNNGQPKTNKTTGFKINFLTELNTTKTVDGKSTFLHILAKSLCQHFPELLGFSRDLITVPLAAKVNQRTITADLSDVHSTIQDIRTACVKIPATAEDRFAAVMSSFLENCHPAVQSLDSLQQRAMDEFHKVASYFGEDSKVTTTETFFGIFAEFISKFERALSETQGTENPKSPRIASPLAW.

Disordered stretches follow at residues 28–82 (CRSK…SNTM), 170–193 (EGPV…RSRS), 322–369 (ASPD…SRDT), 414–635 (ELSS…SDNN), and 990–1009 (SETQ…PLAW). Positions 44-53 (RSQDHHERPQ) are enriched in basic and acidic residues. Positions 95 to 172 (TIRVYRGKKS…MPSLVVEEGP (78 aa)) constitute a PDZ domain. Over residues 322–332 (ASPDSVDSNPY) the composition is skewed to polar residues. 2 stretches are compositionally biased toward low complexity: residues 334 to 352 (SLDS…SPLP) and 427 to 439 (DDST…SGSD). Composition is skewed to pro residues over residues 441–455 (IPPP…PPPL), 462–477 (SPLP…PPPA), and 484–493 (IAPPPPPPRP). Residues 521–535 (SSPQPSSQPILQLHQ) show a composition bias toward low complexity. Polar residues predominate over residues 557–602 (AQHTRLQHPSQSIYQSQQTTVPRTSPSLTKQKSLHSQPSQQSFEGT). Residues 607–628 (VPPPPPPPLPPPCDPPPLPKPS) show a composition bias toward pro residues. Residues 629-1009 (PKASDNNHMS…SPRIASPLAW (381 aa)) form the FH2 domain.

The protein localises to the postsynaptic cell membrane. In terms of biological role, postsynaptic scaffolding protein. This is Delphilin (grid2ip) from Danio rerio (Zebrafish).